A 206-amino-acid chain; its full sequence is Glycerol-3-phosphate acyltransferase (206 aa).

6 consecutive transmembrane segments (helical) span residues 4-24 (TAFA…AVIV), 53-73 (LAAA…VALA), 86-106 (GIAL…FFGF), 116-136 (VGIL…TWLF), 137-157 (MAFV…LAPV), and 160-180 (FFIL…AIVV).

It belongs to the PlsY family. As to quaternary structure, probably interacts with PlsX.

The protein resides in the cell inner membrane. The catalysed reaction is an acyl phosphate + sn-glycerol 3-phosphate = a 1-acyl-sn-glycero-3-phosphate + phosphate. It functions in the pathway lipid metabolism; phospholipid metabolism. Its function is as follows. Catalyzes the transfer of an acyl group from acyl-phosphate (acyl-PO(4)) to glycerol-3-phosphate (G3P) to form lysophosphatidic acid (LPA). This enzyme utilizes acyl-phosphate as fatty acyl donor, but not acyl-CoA or acyl-ACP. The chain is Glycerol-3-phosphate acyltransferase from Chromobacterium violaceum (strain ATCC 12472 / DSM 30191 / JCM 1249 / CCUG 213 / NBRC 12614 / NCIMB 9131 / NCTC 9757 / MK).